The chain runs to 360 residues: MSIEELARENVRTLTPYQSARRLGGNGDVWLNANEYPLPVEFQLTAQTLNRYPECQPKRVIERYAQYAGVKPEQVLVSRGADEGIELLIRAFCEPGRDAVLYCPPTYGMYSVSAETSGVECRTVQATDGWQLDLPAIAEQLDGVKVIFVCSPNNPTGQLINPQDLRTLLEMARGKAIVVADEAYIEFCPQATLAGWLGEYPHLVVLRTLSKAFALAGLRCGFTLANEEVINLLLKVIAPYPLSTPVADIAAQALSPEGITAMRERVAQVLANRDVLIAGLRETPCVEAVFDSETNYVLARITASSAVFKSLWDQGIILRDQNRQPTLSGCLRITVGTREECQRVIDALRDQPGLAATERV.

Lys-211 carries the N6-(pyridoxal phosphate)lysine modification.

Belongs to the class-II pyridoxal-phosphate-dependent aminotransferase family. Histidinol-phosphate aminotransferase subfamily. As to quaternary structure, homodimer. Pyridoxal 5'-phosphate serves as cofactor.

The catalysed reaction is L-histidinol phosphate + 2-oxoglutarate = 3-(imidazol-4-yl)-2-oxopropyl phosphate + L-glutamate. Its pathway is amino-acid biosynthesis; L-histidine biosynthesis; L-histidine from 5-phospho-alpha-D-ribose 1-diphosphate: step 7/9. The protein is Histidinol-phosphate aminotransferase of Cronobacter sakazakii (strain ATCC BAA-894) (Enterobacter sakazakii).